Consider the following 313-residue polypeptide: Porphobilinogen deaminase (313 aa).

S-(dipyrrolylmethanemethyl)cysteine is present on cysteine 242.

This sequence belongs to the HMBS family. Monomer. The cofactor is dipyrromethane.

It carries out the reaction 4 porphobilinogen + H2O = hydroxymethylbilane + 4 NH4(+). Its pathway is porphyrin-containing compound metabolism; protoporphyrin-IX biosynthesis; coproporphyrinogen-III from 5-aminolevulinate: step 2/4. In terms of biological role, tetrapolymerization of the monopyrrole PBG into the hydroxymethylbilane pre-uroporphyrinogen in several discrete steps. The polypeptide is Porphobilinogen deaminase (Pseudomonas putida (strain ATCC 47054 / DSM 6125 / CFBP 8728 / NCIMB 11950 / KT2440)).